The following is a 143-amino-acid chain: Transcriptional regulator MraZ (143 aa).

SpoVT-AbrB domains are found at residues Thr-5–Glu-47 and Thr-76–Ala-119.

This sequence belongs to the MraZ family. In terms of assembly, forms oligomers.

It localises to the cytoplasm. Its subcellular location is the nucleoid. This is Transcriptional regulator MraZ from Mycobacterium avium (strain 104).